The following is a 486-amino-acid chain: Na(+)/H(+) antiporter NhaA 2 (486 aa).

11 helical membrane-spanning segments follow: residues 58–78 (GGLL…TAPG), 102–122 (LTDW…GLEL), 138–158 (ALPV…CLAL), 168–188 (AWAI…SLAG), 198–218 (VLLG…ALGL), 220–240 (HGIN…TALA), 260–280 (ISLH…GLLV), 300–320 (LGPI…TGVS), 338–358 (VAVG…WLAV), 374–394 (LVPL…ITRL), and 404–424 (GAST…LTAL). The segment at 432 to 486 (GAPATRGSSRPATQVGGVAGPIPQTRRESDGGPTGGQEPPPARVRRAPPASPHPR) is disordered.

This sequence belongs to the NhaA Na(+)/H(+) (TC 2.A.33) antiporter family.

The protein localises to the cell membrane. The enzyme catalyses Na(+)(in) + 2 H(+)(out) = Na(+)(out) + 2 H(+)(in). In terms of biological role, na(+)/H(+) antiporter that extrudes sodium in exchange for external protons. The chain is Na(+)/H(+) antiporter NhaA 2 from Frankia alni (strain DSM 45986 / CECT 9034 / ACN14a).